Here is a 608-residue protein sequence, read N- to C-terminus: Isocitrate dehydrogenase kinase/phosphatase (608 aa).

ATP-binding positions include 328-334 and lysine 349; that span reads APGIKGL. Residue aspartate 384 is part of the active site.

It belongs to the AceK family.

It localises to the cytoplasm. It carries out the reaction L-seryl-[isocitrate dehydrogenase] + ATP = O-phospho-L-seryl-[isocitrate dehydrogenase] + ADP + H(+). Functionally, bifunctional enzyme which can phosphorylate or dephosphorylate isocitrate dehydrogenase (IDH) on a specific serine residue. This is a regulatory mechanism which enables bacteria to bypass the Krebs cycle via the glyoxylate shunt in response to the source of carbon. When bacteria are grown on glucose, IDH is fully active and unphosphorylated, but when grown on acetate or ethanol, the activity of IDH declines drastically concomitant with its phosphorylation. This chain is Isocitrate dehydrogenase kinase/phosphatase, found in Cupriavidus pinatubonensis (strain JMP 134 / LMG 1197) (Cupriavidus necator (strain JMP 134)).